The chain runs to 196 residues: RNA-binding protein with multiple splicing 2 (196 aa).

Positions 20-97 (RTLFVSGLPI…QTLRLEFAKA (78 aa)) constitute an RRM domain. The interval 30-40 (DIKPRELYLLF) is important for homodimerization.

Homodimer. In terms of tissue distribution, expressed in developing heart, pronephros, retina and epiphysis. In adult, high expression in heart, moderate in kidney, undetectable in liver, lung and skeletal muscle.

It localises to the cytoplasm. The protein localises to the nucleus. It is found in the stress granule. In terms of biological role, RNA-binding protein involved in the regulation of smooth muscle cell differentiation and proliferation in the gastrointestinal system. Binds NOG mRNA, the major inhibitor of the bone morphogenetic protein (BMP) pathway. Mediates an increase of NOG mRNA levels, thereby contributing to the negative regulation of BMP signaling pathway and promoting reversible dedifferentiation and proliferation of smooth muscle cells. Acts as a pre-mRNA alternative splicing regulator. Mediates ACTN1 and FLNB alternative splicing. Likely binds to mRNA tandem CAC trinucleotide or CA dinucleotide motifs. This Xenopus laevis (African clawed frog) protein is RNA-binding protein with multiple splicing 2.